Reading from the N-terminus, the 294-residue chain is Secreted frizzled-related protein 2 (294 aa).

An N-terminal signal peptide occupies residues 1–24 (MPRGPGSLLLLVLASHCCLGSARG). The FZ domain maps to 34–154 (YKRSNCKPIP…PQDNDLCIPL (121 aa)). Intrachain disulfides connect Cys-39–Cys-102, Cys-49–Cys-95, Cys-86–Cys-124, Cys-113–Cys-151, Cys-117–Cys-141, Cys-171–Cys-244, Cys-174–Cys-246, and Cys-189–Cys-294. Residues 171–294 (CEACKNKNED…ISRSIRKLQC (124 aa)) enclose the NTR domain.

Belongs to the secreted frizzled-related protein (sFRP) family.

The protein resides in the secreted. Soluble frizzled-related proteins (sFRPS) function as modulators of Wnt signaling through direct interaction with Wnts. They have a role in regulating cell growth and differentiation in specific cell types. SFRP2 may be important for eye retinal development and for myogenesis. In Canis lupus familiaris (Dog), this protein is Secreted frizzled-related protein 2 (SFRP2).